A 222-amino-acid chain; its full sequence is Large ribosomal subunit protein uL4 (222 aa).

The tract at residues 42–100 (AAGRQGTHSTKTRGEVRGGGKKPYRQKGTGRARQGSVRAPQFTGGGTVHGPKPRDYAQR) is disordered. Residues 60 to 71 (GGKKPYRQKGTG) are compositionally biased toward basic residues.

This sequence belongs to the universal ribosomal protein uL4 family. Part of the 50S ribosomal subunit.

In terms of biological role, one of the primary rRNA binding proteins, this protein initially binds near the 5'-end of the 23S rRNA. It is important during the early stages of 50S assembly. It makes multiple contacts with different domains of the 23S rRNA in the assembled 50S subunit and ribosome. Functionally, forms part of the polypeptide exit tunnel. This is Large ribosomal subunit protein uL4 from Thermobifida fusca (strain YX).